The chain runs to 55 residues: MAKATTIKIKLLSTADTGFFYVTTKNSRTMTDKMTKTKYDPVARKHVEFKEAKIK.

The protein belongs to the bacterial ribosomal protein bL33 family.

This is Large ribosomal subunit protein bL33 from Sinorhizobium medicae (strain WSM419) (Ensifer medicae).